The chain runs to 153 residues: SsrA-binding protein (153 aa).

Belongs to the SmpB family.

Its subcellular location is the cytoplasm. Required for rescue of stalled ribosomes mediated by trans-translation. Binds to transfer-messenger RNA (tmRNA), required for stable association of tmRNA with ribosomes. tmRNA and SmpB together mimic tRNA shape, replacing the anticodon stem-loop with SmpB. tmRNA is encoded by the ssrA gene; the 2 termini fold to resemble tRNA(Ala) and it encodes a 'tag peptide', a short internal open reading frame. During trans-translation Ala-aminoacylated tmRNA acts like a tRNA, entering the A-site of stalled ribosomes, displacing the stalled mRNA. The ribosome then switches to translate the ORF on the tmRNA; the nascent peptide is terminated with the 'tag peptide' encoded by the tmRNA and targeted for degradation. The ribosome is freed to recommence translation, which seems to be the essential function of trans-translation. The chain is SsrA-binding protein from Desulforudis audaxviator (strain MP104C).